The primary structure comprises 195 residues: Translation machinery-associated protein 22 (195 aa).

Positions 94–165 (VLIKRIERNR…EAKEYIEKLL (72 aa)) constitute an SUI1 domain. Residues 176–195 (EQVDEKKKKKATAPGATPAA) are disordered.

It belongs to the DENR family. As to quaternary structure, interacts with the 40S ribosomal subunit.

It localises to the cytoplasm. This chain is Translation machinery-associated protein 22 (TMA22), found in Scheffersomyces stipitis (strain ATCC 58785 / CBS 6054 / NBRC 10063 / NRRL Y-11545) (Yeast).